The primary structure comprises 121 residues: Large ribosomal subunit protein bL19 (121 aa).

Belongs to the bacterial ribosomal protein bL19 family.

This protein is located at the 30S-50S ribosomal subunit interface and may play a role in the structure and function of the aminoacyl-tRNA binding site. The protein is Large ribosomal subunit protein bL19 of Chlamydia caviae (strain ATCC VR-813 / DSM 19441 / 03DC25 / GPIC) (Chlamydophila caviae).